A 273-amino-acid chain; its full sequence is Non-homologous end joining protein Ku (273 aa).

Residues 10–193 enclose the Ku domain; it reads AFGLVNVPVK…KVEIKPAELK (184 aa). The sufficient for interaction with LigD stretch occupies residues 111-273; sequence FLEPDSKSSK…KANSNVPTPP (163 aa).

The protein belongs to the prokaryotic Ku family. In terms of assembly, homodimer. Interacts with LigD.

Its function is as follows. With LigD forms a non-homologous end joining (NHEJ) DNA repair enzyme, which repairs dsDNA breaks with reduced fidelity. Binds linear dsDNA with 5'- and 3'- overhangs but not closed circular dsDNA nor ssDNA. Recruits and stimulates the ligase activity of LigD. The chain is Non-homologous end joining protein Ku (mku) from Mycobacterium tuberculosis (strain CDC 1551 / Oshkosh).